We begin with the raw amino-acid sequence, 280 residues long: uncharacterized protein (280 aa).

7 helical membrane-spanning segments follow: residues 6-26 (YLVI…TPLV), 38-58 (VLAI…YLFP), 79-99 (IFLL…VFLK), 105-125 (GVLA…ELIF), 144-164 (NQIY…IILW), 171-191 (ISFF…ALMV), and 231-251 (LVFI…TLFA).

It is found in the cell membrane. This is an uncharacterized protein from Mycoplasma genitalium (strain ATCC 33530 / DSM 19775 / NCTC 10195 / G37) (Mycoplasmoides genitalium).